The sequence spans 503 residues: uncharacterized protein (503 aa).

2 stretches are compositionally biased toward basic and acidic residues: residues 1–23 and 203–215; these read MAHEGPRQVRDRGMTRSKAEKVR and PLEKLGDQSRSDQ. 2 disordered regions span residues 1-29 and 149-227; these read MAHEGPRQVRDRGMTRSKAEKVRPPTVPV and ETFQ…SNSS. 2 positions are modified to phosphoserine: S239 and S243. Disordered stretches follow at residues 346 to 370 and 450 to 475; these read LDPARLPRPDMARSPSPKLWPGAKW and LLSSSEPQRNDREGSASPPIHTGAPK. Basic and acidic residues predominate over residues 347–356; the sequence is DPARLPRPDM.

This is an uncharacterized protein from Bos taurus (Bovine).